The following is a 219-amino-acid chain: Transmembrane protein 179B (219 aa).

4 helical membrane-spanning segments follow: residues 9–29, 65–85, 96–116, and 167–187; these read VELA…AAMT, FVAG…LFWI, GAIG…LVLV, and TSSW…VVQW. A disordered region spans residues 198–219; sequence ERGDPEWSSETDALVGSRLSHS. Phosphoserine occurs at positions 206 and 214.

The protein belongs to the TMEM179 family.

It localises to the membrane. This chain is Transmembrane protein 179B (TMEM179B), found in Homo sapiens (Human).